Here is a 339-residue protein sequence, read N- to C-terminus: D-erythrose-4-phosphate dehydrogenase (339 aa).

Residue 11-12 coordinates NAD(+); the sequence is RI. Substrate contacts are provided by residues 158–160, R204, 217–218, and R240; these read SCT and TK. C159 serves as the catalytic Nucleophile. N322 provides a ligand contact to NAD(+).

It belongs to the glyceraldehyde-3-phosphate dehydrogenase family. Epd subfamily. In terms of assembly, homotetramer.

Its subcellular location is the cytoplasm. It carries out the reaction D-erythrose 4-phosphate + NAD(+) + H2O = 4-phospho-D-erythronate + NADH + 2 H(+). It functions in the pathway cofactor biosynthesis; pyridoxine 5'-phosphate biosynthesis; pyridoxine 5'-phosphate from D-erythrose 4-phosphate: step 1/5. Functionally, catalyzes the NAD-dependent conversion of D-erythrose 4-phosphate to 4-phosphoerythronate. This chain is D-erythrose-4-phosphate dehydrogenase, found in Aliivibrio fischeri (strain MJ11) (Vibrio fischeri).